A 163-amino-acid polypeptide reads, in one-letter code: MSSQIQSVHTPSVSLSKYRDQHFKGSRHEQEKLLRVSSTLYVGNLSFYTTEEQIHELFSRCGDVRRIIMGLDKFKKTPCGFCFVEYYSRLDAESAMRYINGTRLDDRIVRVDWDAGFIEGRQYGRGKTGGQVRDEYRQDHDLGRGGYGKMVQMGQLGAPSMRE.

MRNA is bound by residues Tyr-18, Tyr-41, 110-114 (RVDWD), 121-125 (RQYGR), and 131-132 (QV). In terms of domain architecture, RRM spans 38 to 116 (STLYVGNLSF…RIVRVDWDAG (79 aa)).

This sequence belongs to the RRM NCBP2 family. As to quaternary structure, component of the nuclear cap-binding complex (CBC), a heterodimer composed of Cbp80 and Cbp20 that interacts with m7GpppG-capped RNA.

The protein resides in the nucleus. In terms of biological role, component of the cap-binding complex (CBC), which binds co-transcriptionally to the 5' cap of pre-mRNAs and is involved in various processes such as pre-mRNA splicing and RNA-mediated gene silencing (RNAi). The CBC complex is involved in miRNA-mediated RNA interference and is required for primary microRNAs (miRNAs) processing. Also involved in innate immunity via the short interfering RNAs (siRNAs) processing machinery by restricting the viral RNA production. In the CBC complex, Cbp20 recognizes and binds capped RNAs (m7GpppG-capped RNA) but requires Cbp80 to stabilize the movement of its N-terminal loop and lock the CBC into a high affinity cap-binding state with the cap structure. The sequence is that of Nuclear cap-binding protein subunit 2 (Cbp20) from Anopheles gambiae (African malaria mosquito).